We begin with the raw amino-acid sequence, 249 residues long: Triosephosphate isomerase (249 aa).

9–11 lines the substrate pocket; the sequence is NWK. H95 acts as the Electrophile in catalysis. The active-site Proton acceptor is E166. Substrate contacts are provided by residues G172, S211, and 232–233; that span reads GG.

The protein belongs to the triosephosphate isomerase family. As to quaternary structure, homodimer.

Its subcellular location is the cytoplasm. It carries out the reaction D-glyceraldehyde 3-phosphate = dihydroxyacetone phosphate. It participates in carbohydrate biosynthesis; gluconeogenesis. Its pathway is carbohydrate degradation; glycolysis; D-glyceraldehyde 3-phosphate from glycerone phosphate: step 1/1. In terms of biological role, involved in the gluconeogenesis. Catalyzes stereospecifically the conversion of dihydroxyacetone phosphate (DHAP) to D-glyceraldehyde-3-phosphate (G3P). The chain is Triosephosphate isomerase from Legionella pneumophila (strain Lens).